A 63-amino-acid polypeptide reads, in one-letter code: Male accessory gland serine protease inhibitor (63 aa).

In terms of domain architecture, BPTI/Kunitz inhibitor spans 6-62 (CGEPHSLDGSPNGISCRGYFPSWSYNPDAQQCVSFVYGGCGGNNNRFGSQNECEERC). Intrachain disulfides connect cysteine 6-cysteine 62, cysteine 21-cysteine 45, and cysteine 37-cysteine 58.

Its function is as follows. Serine protease inhibitor. This peptide can inhibit, in-vivo, acrosin and, to a lower level, plasma kallikrein. It probably plays a role in Drosophila reproduction. The polypeptide is Male accessory gland serine protease inhibitor (PapD) (Drosophila funebris (Fruit fly)).